We begin with the raw amino-acid sequence, 190 residues long: Crossover junction endodeoxyribonuclease RuvC (190 aa).

Active-site residues include Asp7, Glu68, and Asp141. Residues Asp7, Glu68, and Asp141 each coordinate Mg(2+).

Belongs to the RuvC family. In terms of assembly, homodimer which binds Holliday junction (HJ) DNA. The HJ becomes 2-fold symmetrical on binding to RuvC with unstacked arms; it has a different conformation from HJ DNA in complex with RuvA. In the full resolvosome a probable DNA-RuvA(4)-RuvB(12)-RuvC(2) complex forms which resolves the HJ. Mg(2+) serves as cofactor.

Its subcellular location is the cytoplasm. It carries out the reaction Endonucleolytic cleavage at a junction such as a reciprocal single-stranded crossover between two homologous DNA duplexes (Holliday junction).. The RuvA-RuvB-RuvC complex processes Holliday junction (HJ) DNA during genetic recombination and DNA repair. Endonuclease that resolves HJ intermediates. Cleaves cruciform DNA by making single-stranded nicks across the HJ at symmetrical positions within the homologous arms, yielding a 5'-phosphate and a 3'-hydroxyl group; requires a central core of homology in the junction. The consensus cleavage sequence is 5'-(A/T)TT(C/G)-3'. Cleavage occurs on the 3'-side of the TT dinucleotide at the point of strand exchange. HJ branch migration catalyzed by RuvA-RuvB allows RuvC to scan DNA until it finds its consensus sequence, where it cleaves and resolves the cruciform DNA. This chain is Crossover junction endodeoxyribonuclease RuvC, found in Endomicrobium trichonymphae.